Here is a 581-residue protein sequence, read N- to C-terminus: uncharacterized protein (581 aa).

This is an uncharacterized protein from Acanthamoeba polyphaga mimivirus (APMV).